The primary structure comprises 517 residues: Lysine--tRNA ligase (517 aa).

Residues 1 to 21 form a disordered region; it reads MTEPNRAQAPAQNKAAADTPA. The segment covering 7-20 has biased composition (low complexity); it reads AQAPAQNKAAADTP. The Mg(2+) site is built by Glu427 and Glu434.

It belongs to the class-II aminoacyl-tRNA synthetase family. Homodimer. Mg(2+) is required as a cofactor.

The protein resides in the cytoplasm. It carries out the reaction tRNA(Lys) + L-lysine + ATP = L-lysyl-tRNA(Lys) + AMP + diphosphate. This Cupriavidus taiwanensis (strain DSM 17343 / BCRC 17206 / CCUG 44338 / CIP 107171 / LMG 19424 / R1) (Ralstonia taiwanensis (strain LMG 19424)) protein is Lysine--tRNA ligase.